The chain runs to 348 residues: Holliday junction branch migration complex subunit RuvB (348 aa).

The large ATPase domain (RuvB-L) stretch occupies residues 4-198 (TTDYGASNTG…FGFTAHLDFY (195 aa)). ATP is bound by residues Leu37, Arg38, Gly79, Lys82, Thr83, Thr84, 145-147 (EDF), Arg188, Tyr198, and Arg235. A Mg(2+)-binding site is contributed by Thr83. The small ATPAse domain (RuvB-S) stretch occupies residues 199–269 (PHEELEKLIE…DVKEALALYQ (71 aa)). The interval 272 to 348 (SEGLDRLDIA…DIIFGNYAQR (77 aa)) is head domain (RuvB-H). Residues Arg327 and Arg332 each contribute to the DNA site.

It belongs to the RuvB family. In terms of assembly, homohexamer. Forms an RuvA(8)-RuvB(12)-Holliday junction (HJ) complex. HJ DNA is sandwiched between 2 RuvA tetramers; dsDNA enters through RuvA and exits via RuvB. An RuvB hexamer assembles on each DNA strand where it exits the tetramer. Each RuvB hexamer is contacted by two RuvA subunits (via domain III) on 2 adjacent RuvB subunits; this complex drives branch migration. In the full resolvosome a probable DNA-RuvA(4)-RuvB(12)-RuvC(2) complex forms which resolves the HJ.

Its subcellular location is the cytoplasm. It catalyses the reaction ATP + H2O = ADP + phosphate + H(+). The RuvA-RuvB-RuvC complex processes Holliday junction (HJ) DNA during genetic recombination and DNA repair, while the RuvA-RuvB complex plays an important role in the rescue of blocked DNA replication forks via replication fork reversal (RFR). RuvA specifically binds to HJ cruciform DNA, conferring on it an open structure. The RuvB hexamer acts as an ATP-dependent pump, pulling dsDNA into and through the RuvAB complex. RuvB forms 2 homohexamers on either side of HJ DNA bound by 1 or 2 RuvA tetramers; 4 subunits per hexamer contact DNA at a time. Coordinated motions by a converter formed by DNA-disengaged RuvB subunits stimulates ATP hydrolysis and nucleotide exchange. Immobilization of the converter enables RuvB to convert the ATP-contained energy into a lever motion, pulling 2 nucleotides of DNA out of the RuvA tetramer per ATP hydrolyzed, thus driving DNA branch migration. The RuvB motors rotate together with the DNA substrate, which together with the progressing nucleotide cycle form the mechanistic basis for DNA recombination by continuous HJ branch migration. Branch migration allows RuvC to scan DNA until it finds its consensus sequence, where it cleaves and resolves cruciform DNA. The protein is Holliday junction branch migration complex subunit RuvB of Bifidobacterium longum (strain DJO10A).